The sequence spans 37 residues: SPTISITAPIDVLRKTWEQERARKQMVKNREFLNSLN.

The protein belongs to the sauvagine/corticotropin-releasing factor/urotensin I family.

The protein localises to the secreted. Its function is as follows. Stimulates fluid secretion by the Malpighian tubules. Increases cyclic AMP production. The chain is Diuretic hormone 1 from Tenebrio molitor (Yellow mealworm beetle).